Reading from the N-terminus, the 369-residue chain is Leucine carboxyl methyltransferase 1 (369 aa).

S-adenosyl-L-methionine is bound by residues Arg-84, Gly-108, Asp-132, 187–188 (DL), and Glu-215.

Belongs to the methyltransferase superfamily. LCMT family.

The enzyme catalyses [phosphatase 2A protein]-C-terminal L-leucine + S-adenosyl-L-methionine = [phosphatase 2A protein]-C-terminal L-leucine methyl ester + S-adenosyl-L-homocysteine. In terms of biological role, methylates the carboxyl group of the C-terminal leucine residue of protein phosphatase 2A catalytic subunits to form alpha-leucine ester residues. The protein is Leucine carboxyl methyltransferase 1 (PPM1) of Debaryomyces hansenii (strain ATCC 36239 / CBS 767 / BCRC 21394 / JCM 1990 / NBRC 0083 / IGC 2968) (Yeast).